The following is a 257-amino-acid chain: Ribosomal RNA small subunit methyltransferase J (257 aa).

Residues 107-108 (RD), 123-124 (ER), and Asp-177 each bind S-adenosyl-L-methionine.

The protein belongs to the methyltransferase superfamily. RsmJ family.

It is found in the cytoplasm. The enzyme catalyses guanosine(1516) in 16S rRNA + S-adenosyl-L-methionine = N(2)-methylguanosine(1516) in 16S rRNA + S-adenosyl-L-homocysteine + H(+). Specifically methylates the guanosine in position 1516 of 16S rRNA. This is Ribosomal RNA small subunit methyltransferase J from Haemophilus influenzae (strain ATCC 51907 / DSM 11121 / KW20 / Rd).